Reading from the N-terminus, the 208-residue chain is Protein GrpE (208 aa).

Basic and acidic residues predominate over residues 1-12 (MTNKDESVEKNT). The disordered stretch occupies residues 1 to 49 (MTNKDESVEKNTESTVEVTNVKQNIDDSVEQTEESKGHLQDEAIEETSD). The span at 13-23 (ESTVEVTNVKQ) shows a compositional bias: polar residues.

The protein belongs to the GrpE family. As to quaternary structure, homodimer.

It localises to the cytoplasm. Functionally, participates actively in the response to hyperosmotic and heat shock by preventing the aggregation of stress-denatured proteins, in association with DnaK and GrpE. It is the nucleotide exchange factor for DnaK and may function as a thermosensor. Unfolded proteins bind initially to DnaJ; upon interaction with the DnaJ-bound protein, DnaK hydrolyzes its bound ATP, resulting in the formation of a stable complex. GrpE releases ADP from DnaK; ATP binding to DnaK triggers the release of the substrate protein, thus completing the reaction cycle. Several rounds of ATP-dependent interactions between DnaJ, DnaK and GrpE are required for fully efficient folding. The protein is Protein GrpE of Staphylococcus aureus (strain bovine RF122 / ET3-1).